A 106-amino-acid chain; its full sequence is Large ribosomal subunit protein uL24 (106 aa).

This sequence belongs to the universal ribosomal protein uL24 family. As to quaternary structure, part of the 50S ribosomal subunit.

Functionally, one of two assembly initiator proteins, it binds directly to the 5'-end of the 23S rRNA, where it nucleates assembly of the 50S subunit. One of the proteins that surrounds the polypeptide exit tunnel on the outside of the subunit. This is Large ribosomal subunit protein uL24 from Erythrobacter litoralis (strain HTCC2594).